The sequence spans 37 residues: Large ribosomal subunit protein bL36 (37 aa).

The protein belongs to the bacterial ribosomal protein bL36 family.

The sequence is that of Large ribosomal subunit protein bL36 from Listeria innocua serovar 6a (strain ATCC BAA-680 / CLIP 11262).